The sequence spans 849 residues: Protein lap1 (849 aa).

17 LRR repeats span residues 18-39 (VIDKLDYSNTPLTDFPEVWQHE), 41-62 (TLEELYLSTTRLQALPPQLFYC), 64-85 (GLRVLHVNSNNLESIPQAIGSL), 87-108 (QLQHLDLNRNLIVNVPEEIKSC), 110-131 (HLTHLDLSCNSLQRLPDAITSL), 133-155 (SLQELLLNETYLEFLPANFGRLV), 156-177 (NLRILELRLNNLMTLPKSMVRL), 179-200 (NLQRLDIGGNEFTELPEVVGEL), 202-224 (SLRELWIDFNQIRRVSANIGKLR), 225-246 (DLQHFEANGNLLDTLPSELSNW), 248-269 (NVEVLSICSNSLEAFPFSVGML), 271-292 (SLVTFKCESNGLTELPDSISYL), 294-315 (QLEELVLSHNKLIRLPSTIGML), 317-338 (SLRFLFADDNQLRQLPDELCSC), 340-362 (QLSVLSVANNQLSALPQNIGNLS), 363-384 (KMKVLNVVNNYINALPVSMLNL), and 386-407 (NLTSMWLSDNQSQPLVPLQYLD). The interval 716-752 (NNISNNLEPNPEEEDQELDDTMSQHSLNSTATNNTSK) is disordered. Residues 725-735 (NPEEEDQELDD) are compositionally biased toward acidic residues. Residues 736–752 (TMSQHSLNSTATNNTSK) show a composition bias toward polar residues. The PDZ domain maps to 770–849 (VKQVTLKWEN…TVMNIMLSRK (80 aa)).

It belongs to the LAP (LRR and PDZ) protein family.

In terms of biological role, may have a role in assembling adherens junctions. The sequence is that of Protein lap1 from Drosophila melanogaster (Fruit fly).